A 297-amino-acid polypeptide reads, in one-letter code: 4-diphosphocytidyl-2-C-methyl-D-erythritol kinase (297 aa).

Active-site residues include Lys-6 and Asp-144.

The protein belongs to the GHMP kinase family. IspE subfamily.

It carries out the reaction 4-CDP-2-C-methyl-D-erythritol + ATP = 4-CDP-2-C-methyl-D-erythritol 2-phosphate + ADP + H(+). The protein operates within isoprenoid biosynthesis; isopentenyl diphosphate biosynthesis via DXP pathway; isopentenyl diphosphate from 1-deoxy-D-xylulose 5-phosphate: step 3/6. In terms of biological role, catalyzes the phosphorylation of the position 2 hydroxy group of 4-diphosphocytidyl-2C-methyl-D-erythritol. The chain is 4-diphosphocytidyl-2-C-methyl-D-erythritol kinase from Leptospira interrogans serogroup Icterohaemorrhagiae serovar copenhageni (strain Fiocruz L1-130).